Here is a 603-residue protein sequence, read N- to C-terminus: D-3-phosphoglycerate dehydrogenase 1, chloroplastic (603 aa).

The N-terminal 54 residues, 1–54, are a transit peptide targeting the chloroplast; the sequence is MSATAAASSSIAVATNSLRNVTLSSRSPLPSAISVAFPSRGRNTLQRRLVLVSC. Residues 210–211, Asp230, 289–291, and Asp315 each bind NAD(+); these read KV and VAR. The active site involves Arg291. Glu320 is an active-site residue. His339 functions as the Proton donor in the catalytic mechanism. An NAD(+)-binding site is contributed by 339–342; that stretch reads HLGA. The ACT domain maps to 531-603; that stretch reads IILCRQVDQP…AVEEFVFLKL (73 aa).

The protein belongs to the D-isomer specific 2-hydroxyacid dehydrogenase family. Ubiquitous, but highly expressed in roots. Expressed in vasculature, root and shoot meristems, distal part of cotyledons and leaves, anther, stigma and pollen grains. Detected at the tip of the cotyledons in late embryos.

The protein localises to the plastid. Its subcellular location is the chloroplast. The catalysed reaction is (2R)-3-phosphoglycerate + NAD(+) = 3-phosphooxypyruvate + NADH + H(+). Its pathway is amino-acid biosynthesis; L-serine biosynthesis; L-serine from 3-phospho-D-glycerate: step 1/3. Partially inhibited by 5 mM serine. Involved in the plastidial phosphorylated pathway of serine biosynthesis (PPSB). Required for mature pollen development. This Arabidopsis thaliana (Mouse-ear cress) protein is D-3-phosphoglycerate dehydrogenase 1, chloroplastic (PGDH1).